The chain runs to 103 residues: Cell division protein CrgA (103 aa).

2 helical membrane passes run 49–69 (FVPLFCALMIIGLIWCVVYYL) and 80–100 (IGAWNLGIGFALIMIGFLMTM).

It belongs to the CrgA family.

The protein resides in the cell membrane. Functionally, involved in cell division. This Bifidobacterium longum (strain NCC 2705) protein is Cell division protein CrgA.